Here is a 311-residue protein sequence, read N- to C-terminus: Ribosomal RNA small subunit methyltransferase H (311 aa).

S-adenosyl-L-methionine is bound by residues 32-34 (AGH), Asp52, Phe79, Asp100, and Gln107. Over residues 289–298 (SKEELEENNR) the composition is skewed to basic and acidic residues. Positions 289–311 (SKEELEENNRARSAKLRIAEKRK) are disordered. Residues 300 to 311 (RSAKLRIAEKRK) are compositionally biased toward basic residues.

This sequence belongs to the methyltransferase superfamily. RsmH family.

It localises to the cytoplasm. The catalysed reaction is cytidine(1402) in 16S rRNA + S-adenosyl-L-methionine = N(4)-methylcytidine(1402) in 16S rRNA + S-adenosyl-L-homocysteine + H(+). Functionally, specifically methylates the N4 position of cytidine in position 1402 (C1402) of 16S rRNA. This chain is Ribosomal RNA small subunit methyltransferase H, found in Bacillus velezensis (strain DSM 23117 / BGSC 10A6 / LMG 26770 / FZB42) (Bacillus amyloliquefaciens subsp. plantarum).